A 682-amino-acid polypeptide reads, in one-letter code: Glutamine--fructose-6-phosphate aminotransferase [isomerizing] 2 (682 aa).

Cysteine 2 serves as the catalytic For GATase activity. The region spanning 2–288 (CGIFAYMNYR…DDDIAAVADG (287 aa)) is the Glutamine amidotransferase type-2 domain. At serine 244 the chain carries Phosphoserine. SIS domains are found at residues 360–499 (HLKE…DRIS) and 531–672 (LALE…VDFP). Substrate is bound by residues 377–378 (TS), 422–424 (SQS), threonine 427, and histidine 578.

The enzyme catalyses D-fructose 6-phosphate + L-glutamine = D-glucosamine 6-phosphate + L-glutamate. It participates in nucleotide-sugar biosynthesis; UDP-N-acetyl-alpha-D-glucosamine biosynthesis; alpha-D-glucosamine 6-phosphate from D-fructose 6-phosphate: step 1/1. In terms of biological role, controls the flux of glucose into the hexosamine pathway. Most likely involved in regulating the availability of precursors for N- and O-linked glycosylation of proteins. In Bos taurus (Bovine), this protein is Glutamine--fructose-6-phosphate aminotransferase [isomerizing] 2 (GFPT2).